We begin with the raw amino-acid sequence, 141 residues long: Hemoglobin subunit alpha-D (141 aa).

In terms of domain architecture, Globin spans 1-141 (MLTAEDKKLI…VAAVLAEKYR (141 aa)). Residues H58 and H87 each contribute to the heme b site.

The protein belongs to the globin family. In terms of assembly, heterotetramer of two alpha-D chains and two beta chains. As to expression, red blood cells.

Functionally, involved in oxygen transport from the lung to the various peripheral tissues. This Anas platyrhynchos (Mallard) protein is Hemoglobin subunit alpha-D (HBAD).